The primary structure comprises 898 residues: Translation initiation factor IF-2 (898 aa).

2 disordered regions span residues R51–K70 and L114–G303. Composition is skewed to basic and acidic residues over residues L114 to K171 and P184 to G258. Positions H398–Q567 constitute a tr-type G domain. The tract at residues G407 to T414 is G1. GTP is bound at residue G407–T414. Residues G432 to H436 are G2. The tract at residues D453 to G456 is G3. GTP is bound by residues D453–H457 and N507–D510. A G4 region spans residues N507 to D510. The G5 stretch occupies residues S543–H545.

It belongs to the TRAFAC class translation factor GTPase superfamily. Classic translation factor GTPase family. IF-2 subfamily.

The protein localises to the cytoplasm. Functionally, one of the essential components for the initiation of protein synthesis. Protects formylmethionyl-tRNA from spontaneous hydrolysis and promotes its binding to the 30S ribosomal subunits. Also involved in the hydrolysis of GTP during the formation of the 70S ribosomal complex. This chain is Translation initiation factor IF-2, found in Alcanivorax borkumensis (strain ATCC 700651 / DSM 11573 / NCIMB 13689 / SK2).